Consider the following 371-residue polypeptide: Bifunctional enzyme IspD/IspF (371 aa).

The interval 1-210 (MSEMSLIMLA…LDLPTPSFEI (210 aa)) is 2-C-methyl-D-erythritol 4-phosphate cytidylyltransferase. Residues 211–371 (FTGNGFDVHE…NLKYFDWTRL (161 aa)) form a 2-C-methyl-D-erythritol 2,4-cyclodiphosphate synthase region. The a divalent metal cation site is built by aspartate 217 and histidine 219. Residues 217-219 (DVH) and 243-244 (HS) contribute to the 4-CDP-2-C-methyl-D-erythritol 2-phosphate site. Histidine 251 provides a ligand contact to a divalent metal cation. 4-CDP-2-C-methyl-D-erythritol 2-phosphate is bound by residues 265–267 (DIG), 270–274 (YPDTD), 309–315 (AQSPKLK), 341–344 (TTTE), phenylalanine 348, and arginine 351.

This sequence in the N-terminal section; belongs to the IspD/TarI cytidylyltransferase family. IspD subfamily. It in the C-terminal section; belongs to the IspF family. Requires a divalent metal cation as cofactor.

It catalyses the reaction 2-C-methyl-D-erythritol 4-phosphate + CTP + H(+) = 4-CDP-2-C-methyl-D-erythritol + diphosphate. The enzyme catalyses 4-CDP-2-C-methyl-D-erythritol 2-phosphate = 2-C-methyl-D-erythritol 2,4-cyclic diphosphate + CMP. It participates in isoprenoid biosynthesis; isopentenyl diphosphate biosynthesis via DXP pathway; isopentenyl diphosphate from 1-deoxy-D-xylulose 5-phosphate: step 2/6. The protein operates within isoprenoid biosynthesis; isopentenyl diphosphate biosynthesis via DXP pathway; isopentenyl diphosphate from 1-deoxy-D-xylulose 5-phosphate: step 4/6. Functionally, bifunctional enzyme that catalyzes the formation of 4-diphosphocytidyl-2-C-methyl-D-erythritol from CTP and 2-C-methyl-D-erythritol 4-phosphate (MEP) (IspD), and catalyzes the conversion of 4-diphosphocytidyl-2-C-methyl-D-erythritol 2-phosphate (CDP-ME2P) to 2-C-methyl-D-erythritol 2,4-cyclodiphosphate (ME-CPP) with a corresponding release of cytidine 5-monophosphate (CMP) (IspF). The chain is Bifunctional enzyme IspD/IspF from Campylobacter jejuni subsp. jejuni serotype O:2 (strain ATCC 700819 / NCTC 11168).